A 178-amino-acid polypeptide reads, in one-letter code: Caveolin-1 (178 aa).

Residue Ser2 is modified to N-acetylserine. Ser2 is subject to Phosphoserine. Residues 2-94 (SGGKYVDSEG…WKASFTTFTV (93 aa)) are required for homooligomerization. The Cytoplasmic segment spans residues 2–104 (SGGKYVDSEG…TKYWFYRLLS (103 aa)). An N6-acetyllysine; alternate modification is found at Lys5. Residue Lys5 forms a Glycyl lysine isopeptide (Lys-Gly) (interchain with G-Cter in ubiquitin); alternate linkage. Tyr6 is subject to Phosphotyrosine. Ser9 carries the post-translational modification Phosphoserine. The residue at position 14 (Tyr14) is a Phosphotyrosine; by ABL1. Tyr25 carries the phosphotyrosine modification. Glycyl lysine isopeptide (Lys-Gly) (interchain with G-Cter in ubiquitin) cross-links involve residues Lys26 and Lys30. A Phosphoserine modification is found at Ser37. Residues Lys39, Lys47, and Lys57 each participate in a glycyl lysine isopeptide (Lys-Gly) (interchain with G-Cter in ubiquitin) cross-link. The interaction with CAVIN3 stretch occupies residues 82–94 (DGIWKASFTTFTV). Residues 105-125 (ALFGIPMALIWGIYFAILSFL) constitute an intramembrane region (helical). The Cytoplasmic portion of the chain corresponds to 126 to 178 (HIWAVVPCIKSFLIEIQCISRVYSIYIHTVCDPLFEAIGKIFSNVRIGLQKEI). The tract at residues 131 to 142 (VPCIKSFLIEIQ) is interacts with SPRY1, SPRY2, SPRY3 and SPRY4. Residues Cys133, Cys143, and Cys156 are each lipidated (S-palmitoyl cysteine). The interacts with SPRY1, SPRY2, and SPRY4 stretch occupies residues 149–160 (SIYIHTVCDPLF). Residues 167 to 178 (FSNVRIGLQKEI) form an interacts with SPRY1, SPRY2, SPRY3 and SPRY4 region.

This sequence belongs to the caveolin family. Homooligomer. Interacts with GLIPR2. Interacts with NOSTRIN. Interacts with SNAP25 and STX1A. Interacts (via the N-terminus) with DPP4; the interaction is direct. Interacts with CTNNB1, CDH1 and JUP. Interacts with PACSIN2; this interaction induces membrane tubulation. Interacts with SLC7A9. Interacts with BMX and BTK. Interacts with TGFBR1. Interacts with CAVIN3 (via leucine-zipper domain) in a cholesterol-sensitive manner. Interacts with CAVIN1. Interacts with EHD2 in a cholesterol-dependent manner. Forms a ternary complex with UBXN6 and VCP; mediates CAV1 targeting to lysosomes for degradation. Interacts with ABCG1; this interaction regulates ABCG1-mediated cholesterol efflux. Interacts with NEU3; this interaction enhances NEU3 sialidase activity within caveola. Interacts (via C-terminus) with SPRY1, SPRY2 (via C-terminus), SPRY3, and SPRY4. Interacts with IGFBP5; this interaction allows trafficking of IGFBP5 from the plasma membrane to the nucleus. Phosphorylated at Tyr-14 by ABL1 in response to oxidative stress. In terms of processing, ubiquitinated. Undergo monoubiquitination and multi- and/or polyubiquitination. Monoubiquitination of N-terminal lysines promotes integration in a ternary complex with UBXN6 and VCP which promotes oligomeric CAV1 targeting to lysosomes for degradation. Ubiquitinated by ZNRF1; leading to degradation and modulation of the TLR4-mediated immune response.

The protein resides in the golgi apparatus membrane. It localises to the cell membrane. Its subcellular location is the membrane. The protein localises to the caveola. It is found in the membrane raft. May act as a scaffolding protein within caveolar membranes. Forms a stable heterooligomeric complex with CAV2 that targets to lipid rafts and drives caveolae formation. Mediates the recruitment of CAVIN proteins (CAVIN1/2/3/4) to the caveolae. Interacts directly with G-protein alpha subunits and can functionally regulate their activity. Involved in the costimulatory signal essential for T-cell receptor (TCR)-mediated T-cell activation. Its binding to DPP4 induces T-cell proliferation and NF-kappa-B activation in a T-cell receptor/CD3-dependent manner. Recruits CTNNB1 to caveolar membranes and may regulate CTNNB1-mediated signaling through the Wnt pathway. Negatively regulates TGFB1-mediated activation of SMAD2/3 by mediating the internalization of TGFBR1 from membrane rafts leading to its subsequent degradation. Binds 20(S)-hydroxycholesterol (20(S)-OHC). The chain is Caveolin-1 (CAV1) from Saimiri boliviensis boliviensis (Bolivian squirrel monkey).